The primary structure comprises 291 residues: Maintenance of mitochondrial morphology protein 1 (291 aa).

Over 1–16 (MPNNYVFSLQPTFTQG) the chain is Lumenal. A helical transmembrane segment spans residues 17–37 (LILGQLSILVLLGMILKFLFL). Residues 38 to 291 (DSTQHPFESS…KKEMSDADLS (254 aa)) are Cytoplasmic-facing. In terms of domain architecture, SMP-LTD spans 73-277 (NAESAEWFNV…LPGLASVVDV (205 aa)).

The protein belongs to the MMM1 family. In terms of assembly, homodimer. Component of the ER-mitochondria encounter structure (ERMES) or MDM complex, composed of MMM1, MDM10, MDM12 and MDM34. An MMM1 homodimer associates with one molecule of MDM12 on each side in a pairwise head-to-tail manner, and the SMP-LTD domains of MMM1 and MDM12 generate a continuous hydrophobic tunnel for phospholipid trafficking.

The protein resides in the endoplasmic reticulum membrane. Its function is as follows. Component of the ERMES/MDM complex, which serves as a molecular tether to connect the endoplasmic reticulum (ER) and mitochondria. Components of this complex are involved in the control of mitochondrial shape and protein biogenesis, and function in nonvesicular lipid trafficking between the ER and mitochondria. The MDM12-MMM1 subcomplex functions in the major beta-barrel assembly pathway that is responsible for biogenesis of all outer membrane beta-barrel proteins, and acts in a late step after the SAM complex. The MDM10-MDM12-MMM1 subcomplex further acts in the TOM40-specific pathway after the action of the MDM12-MMM1 complex. Essential for establishing and maintaining the structure of mitochondria and maintenance of mtDNA nucleoids. The protein is Maintenance of mitochondrial morphology protein 1 of Laccaria bicolor (strain S238N-H82 / ATCC MYA-4686) (Bicoloured deceiver).